Consider the following 435-residue polypeptide: C4-dicarboxylate transport protein (435 aa).

A run of 9 helical transmembrane segments spans residues 4–24, 44–64, 76–96, 142–162, 184–204, 222–242, 289–309, 326–346, and 352–372; these read SLFK…ILLG, LIKM…IAGM, VALL…LIIV, IGAF…LFGF, VIFG…FGAM, LIIC…GTIA, VVGL…SIYL, IFHQ…VAGV, and IVLA…LALI.

The protein belongs to the dicarboxylate/amino acid:cation symporter (DAACS) (TC 2.A.23) family.

The protein localises to the cell inner membrane. Its function is as follows. Responsible for the transport of dicarboxylates such as succinate, fumarate, and malate from the periplasm across the membrane. The sequence is that of C4-dicarboxylate transport protein from Salmonella paratyphi A (strain ATCC 9150 / SARB42).